The sequence spans 1070 residues: DNA-directed RNA polymerase subunit beta (1070 aa).

Belongs to the RNA polymerase beta chain family. In plastids the minimal PEP RNA polymerase catalytic core is composed of four subunits: alpha, beta, beta', and beta''. When a (nuclear-encoded) sigma factor is associated with the core the holoenzyme is formed, which can initiate transcription.

It localises to the plastid. Its subcellular location is the chloroplast. It catalyses the reaction RNA(n) + a ribonucleoside 5'-triphosphate = RNA(n+1) + diphosphate. In terms of biological role, DNA-dependent RNA polymerase catalyzes the transcription of DNA into RNA using the four ribonucleoside triphosphates as substrates. The polypeptide is DNA-directed RNA polymerase subunit beta (Daucus carota (Wild carrot)).